A 468-amino-acid chain; its full sequence is ATP synthase subunit beta (468 aa).

153–160 (GGAGVGKT) provides a ligand contact to ATP.

Belongs to the ATPase alpha/beta chains family. In terms of assembly, F-type ATPases have 2 components, CF(1) - the catalytic core - and CF(0) - the membrane proton channel. CF(1) has five subunits: alpha(3), beta(3), gamma(1), delta(1), epsilon(1). CF(0) has three main subunits: a(1), b(2) and c(9-12). The alpha and beta chains form an alternating ring which encloses part of the gamma chain. CF(1) is attached to CF(0) by a central stalk formed by the gamma and epsilon chains, while a peripheral stalk is formed by the delta and b chains.

The protein localises to the cell inner membrane. It catalyses the reaction ATP + H2O + 4 H(+)(in) = ADP + phosphate + 5 H(+)(out). Produces ATP from ADP in the presence of a proton gradient across the membrane. The catalytic sites are hosted primarily by the beta subunits. This Nautilia profundicola (strain ATCC BAA-1463 / DSM 18972 / AmH) protein is ATP synthase subunit beta.